Consider the following 570-residue polypeptide: KH homology domain-containing protein 4 (570 aa).

Positions 1–29 (MSFGVPHSGGSRRSKWDQAGPDADAGSAP) are disordered. KH domains lie at 77-157 (DDLV…RIKE) and 210-292 (VFVG…NLLQ). The segment covering 391-407 (PPTAPVPPKLTAPPNPP) has biased composition (pro residues). 3 disordered regions span residues 391–410 (PPTAPVPPKLTAPPNPPQKR), 438–500 (AGMP…EPQV), and 512–570 (GDSS…WMAP). The tract at residues 427 to 497 (QHGPIHMTNL…ESPSAPSLLE (71 aa)) is required for nuclear retention. Residues 553 to 562 (TQTAPQPTQQ) show a composition bias toward low complexity.

Belongs to the KHDC4 family. In terms of assembly, interacts with PRPF19.

The protein resides in the nucleus. Its subcellular location is the cytoplasm. In terms of biological role, RNA-binding protein involved in pre-mRNA splicing. Interacts with the PRP19C/Prp19 complex/NTC/Nineteen complex which is part of the spliceosome. Involved in regulating splice site selection. Binds preferentially RNA with A/C rich sequences and poly-C stretches. In Danio rerio (Zebrafish), this protein is KH homology domain-containing protein 4 (khdc4).